The sequence spans 322 residues: uncharacterized protein (322 aa).

Composition is skewed to basic residues over residues 1–16 (MPGN…KSGT) and 43–61 (LRPH…RRPV). The disordered stretch occupies residues 1-69 (MPGNSRRRGA…PVKRADETET (69 aa)). G261, I281, and L290 together coordinate S-adenosyl-L-methionine.

This sequence belongs to the class IV-like SAM-binding methyltransferase superfamily. RNA methyltransferase TrmH family.

This is an uncharacterized protein from Mycobacterium bovis (strain BCG / Pasteur 1173P2).